Reading from the N-terminus, the 335-residue chain is Biotin synthase (335 aa).

The Radical SAM core domain maps to tyrosine 43–alanine 269. [4Fe-4S] cluster is bound by residues cysteine 61, cysteine 65, and cysteine 68. [2Fe-2S] cluster-binding residues include cysteine 104, cysteine 137, cysteine 197, and arginine 267.

Belongs to the radical SAM superfamily. Biotin synthase family. In terms of assembly, homodimer. It depends on [4Fe-4S] cluster as a cofactor. The cofactor is [2Fe-2S] cluster.

It carries out the reaction (4R,5S)-dethiobiotin + (sulfur carrier)-SH + 2 reduced [2Fe-2S]-[ferredoxin] + 2 S-adenosyl-L-methionine = (sulfur carrier)-H + biotin + 2 5'-deoxyadenosine + 2 L-methionine + 2 oxidized [2Fe-2S]-[ferredoxin]. The protein operates within cofactor biosynthesis; biotin biosynthesis; biotin from 7,8-diaminononanoate: step 2/2. Its function is as follows. Catalyzes the conversion of dethiobiotin (DTB) to biotin by the insertion of a sulfur atom into dethiobiotin via a radical-based mechanism. The protein is Biotin synthase of Staphylococcus aureus (strain MRSA252).